We begin with the raw amino-acid sequence, 99 residues long: Large ribosomal subunit protein uL23 (99 aa).

Belongs to the universal ribosomal protein uL23 family. As to quaternary structure, part of the 50S ribosomal subunit. Contacts protein L29, and trigger factor when it is bound to the ribosome.

Its function is as follows. One of the early assembly proteins it binds 23S rRNA. One of the proteins that surrounds the polypeptide exit tunnel on the outside of the ribosome. Forms the main docking site for trigger factor binding to the ribosome. This chain is Large ribosomal subunit protein uL23, found in Pseudomonas aeruginosa (strain LESB58).